Consider the following 130-residue polypeptide: MAATQYYGTGRRKTSTARVFAKAGSGNIVVNQRPLDQYFGRETARMVVRQPLELVEMTDKLDIYVTVKGGGITGQAGAIRHGITRALMQLDEALRPSLRSAGFVTRDARKVERKKVGLRKARRKPQFSKR.

This sequence belongs to the universal ribosomal protein uS9 family.

This is Small ribosomal subunit protein uS9 from Shewanella baltica (strain OS155 / ATCC BAA-1091).